The chain runs to 760 residues: MGLTGRKSEKGPVCWRRRVKSEYMRLRQLKRFRRADEVKSMFSSNRQKILERTDILNQEWKLRRIQPVHIMTPVSSLRGTRECTVDSGFSEFSRQVIPLKTLNAVASVPVMYSWSPLQQNFMVEDETVLHNIPYMGDEILDQDGTFIEELIKNYDGKVHGDRECGFINDEIFVELVNALNQYSDNEEDDEEDDHHDYKFEKMDLCDGKDDAEDHKEQLSSESHNNDGSKKFPSDKIFEAISSMFPDKGSTEELKEKYKELTEQQLPGALPPECTPNIDGPNAKSVQREQSLHSFHTLFCRRCFKYDCFLHPFQATPNTYKRKNMENLVDSKPCGIYCYMYMVQDGMVREYPAGVVPERAKTPSKRSTGRRRGRLPNSNSRPSTPTVNSETKDTDSDREGGADGNDSNDKDDDDKKDETTSSSEANSRCQTPVKLKLSSEPPENVDWSGAEASLFRVLIGTYYDNFCAIARLIGTKTCRQVYEFRVKESSIIARAPAVDENTPQRKKKRKHRLWATHCRKIQLKKDGSSNHVYNYQPCDHPRQPCDSSCPCVTAQNFCEKFCQCSSECQNRFPGCRCKAQCNTKQCPCYLAVRECDPDLCLTCGAAEHWDSKNVSCKNCSIQRGAKKHLLLAPSDVAGWGIFIKEPVQKNEFISEYCGEIISQDEADRRGKVYDKYMCSFLFNLNNDFVVDATRKGNKIRFANHSVNPNCYAKVMMVNGDHRIGIFAKRAIQTGEELFFDYRYSQADALKYVGIEREMEIP.

Disordered stretches follow at residues 208–231 and 356–444; these read KDDAEDHKEQLSSESHNNDGSKKF and PERA…PENV. Residues 361–373 are compositionally biased toward basic residues; that stretch reads TPSKRSTGRRRGR. Over residues 375-388 the composition is skewed to polar residues; the sequence is PNSNSRPSTPTVNS. Basic and acidic residues predominate over residues 389–400; sequence ETKDTDSDREGG. Positions 517–619 constitute a CXC domain; it reads CRKIQLKKDG…SKNVSCKNCS (103 aa). The 116-residue stretch at 626–741 folds into the SET domain; sequence KHLLLAPSDV…TGEELFFDYR (116 aa).

The protein belongs to the class V-like SAM-binding methyltransferase superfamily. Histone-lysine methyltransferase family. EZ subfamily. As to quaternary structure, component of the prc2/eed-ezh2 complex.

The protein localises to the nucleus. It catalyses the reaction L-lysyl(27)-[histone H3] + 3 S-adenosyl-L-methionine = N(6),N(6),N(6)-trimethyl-L-lysyl(27)-[histone H3] + 3 S-adenosyl-L-homocysteine + 3 H(+). Its function is as follows. Polycomb group (PcG) protein. Catalytic subunit of the prc2/eed-ezh2 complex, which methylates 'Lys-9' and 'Lys-27' of histone H3, leading to transcriptional repression of the affected target gene. May regulate the circadian clock via histone methylation at the promoter of the circadian genes. The protein is Histone-lysine N-methyltransferase EZH2 (ezh2) of Danio rerio (Zebrafish).